Consider the following 1403-residue polypeptide: Sushi, nidogen and EGF-like domain-containing protein 1 (1403 aa).

The signal sequence occupies residues 1–24; sequence MRRGAAWALLLAAALGLGARGVRA. The region spanning 103 to 258 is the NIDO domain; sequence AFWADVDNRR…GRWAFRIDDA (156 aa). EGF-like domains follow at residues 268 to 309, 311 to 347, and 349 to 385; these read TTSV…RRCH, DVNECASHPCQNGGTCTHGVNSFSCQCPAGFQGPTCE, and AQSPCDNKVCQNGGQCQAESSSAVCVCQAGYTGATCE. 18 disulfides stabilise this stretch: Cys-272/Cys-284, Cys-278/Cys-297, Cys-299/Cys-308, Cys-315/Cys-326, Cys-320/Cys-335, Cys-337/Cys-346, Cys-353/Cys-364, Cys-358/Cys-373, Cys-375/Cys-384, Cys-391/Cys-402, Cys-396/Cys-411, Cys-413/Cys-422, Cys-433/Cys-444, Cys-438/Cys-453, Cys-455/Cys-464, Cys-472/Cys-480, Cys-474/Cys-488, and Cys-490/Cys-499. Asn-292 is a glycosylation site (N-linked (GlcNAc...) asparagine). One can recognise an EGF-like 4; calcium-binding domain in the interval 387-423; sequence DVDECSSDPCLNGGSCVDLVGNYSCICVEPFEGPQCE. Residue Asn-408 is glycosylated (N-linked (GlcNAc...) asparagine). EGF-like domains are found at residues 429 to 465 and 468 to 500; these read VPSPCLSNPCLNGGTCVDADQGYVCECPEGFMGLDCR and ILNDCDCRNGGRCLGANTTICQCPPGFFGLLCE. An N-linked (GlcNAc...) asparagine glycan is attached at Asn-484. An N-linked (GlcNAc...) asparagine glycan is attached at Asn-536. EGF-like domains lie at 541-577, 580-616, 619-655, and 657-693; these read LPSPCDSDPCFNGGSCDAHEDSYTCECPRGFHGRHCE, RPHLCSSGPCRNGGTCKETGDEYRCTCPYRFTGRHCE, KPDSCASGPCHNGGTCFHYIGKYKCDCPPGFSGRHCE, and APSPCFRSPCMNGGICEDLGTDFSCHCQPGYTGHRCQ. 26 cysteine pairs are disulfide-bonded: Cys-545-Cys-556, Cys-550-Cys-565, Cys-567-Cys-576, Cys-584-Cys-595, Cys-589-Cys-604, Cys-606-Cys-615, Cys-623-Cys-634, Cys-628-Cys-643, Cys-645-Cys-654, Cys-661-Cys-672, Cys-666-Cys-681, Cys-683-Cys-692, Cys-698-Cys-739, Cys-724-Cys-751, Cys-757-Cys-768, Cys-762-Cys-777, Cys-779-Cys-788, Cys-795-Cys-806, Cys-800-Cys-815, Cys-817-Cys-826, Cys-833-Cys-844, Cys-838-Cys-853, Cys-855-Cys-864, Cys-871-Cys-882, Cys-876-Cys-891, and Cys-893-Cys-902. The 58-residue stretch at 696-753 folds into the Sushi domain; sequence VDCGQPEEVKHATMRLNGTRMGSVALYTCDPGFSLSVLSHMRVCQPQGVWSQPPQCIE. A glycan (N-linked (GlcNAc...) asparagine) is linked at Asn-712. Residues 753-789 enclose the EGF-like 11; calcium-binding domain; that stretch reads EVDECQSQPCLHKGSCQDLIAGYQCLCSPGYEGVHCE. In terms of domain architecture, EGF-like 12; calcium-binding spans 791–827; that stretch reads ETDECQAQPCRNGGSCRDLPGAFICQCPEGFVGTHCE. EGF-like domains follow at residues 829-865 and 867-903; these read EVDACASSPCQHGGRCEDGGGAYLCVCPEGFFGYNCE and VSDPCFSSPCGGRGYCLASNGSHSCTCKVGYTGKDCT. The N-linked (GlcNAc...) asparagine glycan is linked to Asn-886. Fibronectin type-III domains are found at residues 908–1006, 1007–1105, and 1106–1200; these read PPTA…TRPR, PIED…TRPL, and PPAN…SPRD. N-linked (GlcNAc...) asparagine glycosylation is found at Asn-977, Asn-1015, Asn-1109, Asn-1139, and Asn-1298. The segment at 1295–1314 is disordered; that stretch reads LPKNNSKDTESTPGSCSEDT. Positions 1305-1314 are enriched in polar residues; that stretch reads STPGSCSEDT. The EGF-like 15 domain occupies 1306 to 1342; the sequence is TPGSCSEDTCQNGGTCVPGANAHSCDCRPGFKGRHCE. 3 disulfide bridges follow: Cys-1310/Cys-1321, Cys-1315/Cys-1330, and Cys-1332/Cys-1341.

Post-translationally, phosphorylated on serine and threonine residues. N-glycosylated. As to expression, expressed in liver.

The protein resides in the secreted. It localises to the extracellular space. Its subcellular location is the extracellular matrix. The sequence is that of Sushi, nidogen and EGF-like domain-containing protein 1 from Rattus norvegicus (Rat).